Reading from the N-terminus, the 1023-residue chain is Sodium/potassium-transporting ATPase subunit alpha-1 (1023 aa).

The propeptide occupies 1–5 (MGKGV). Over residues 1–11 (MGKGVGRDKYE) the composition is skewed to basic and acidic residues. The segment at 1 to 38 (MGKGVGRDKYEPAAVSEHGDKKSKKAKKERDMDELKKE) is disordered. Residues 6-87 (GRDKYEPAAV…NALTPPPTTP (82 aa)) are Cytoplasmic-facing. The residue at position 9 (Lys9) is an N6-acetyllysine. Position 10 is a phosphotyrosine (Tyr10). Ser16 is subject to Phosphoserine; by PKC. Position 21 is an N6-acetyllysine (Lys21). The residue at position 23 (Ser23) is a Phosphoserine; by PKC. A compositionally biased stretch (basic and acidic residues) spans 28-38 (KERDMDELKKE). Residues Ser40 and Ser47 each carry the phosphoserine modification. Positions 82-84 (PPP) are phosphoinositide-3 kinase binding. A helical transmembrane segment spans residues 88–108 (EWVKFCRQLFGGFSMLLWIGA). The Extracellular segment spans residues 109 to 131 (ILCFLAYGIRSATEEEPPNDDLY). Residues 132-152 (LGVVLSAVVIITGCFSYYQEA) traverse the membrane as a helical segment. Over 153-288 (KSSKIMESFK…GGQTPIAEEI (136 aa)) the chain is Cytoplasmic. A disordered region spans residues 216 to 235 (SSLTGESEPQTRSPDFTNEN). Residue Ser228 is modified to Phosphoserine. Tyr260 carries the phosphotyrosine modification. A helical membrane pass occupies residues 289 to 308 (EHFIHLITGVAVFLGVSFFI). Topologically, residues 309–320 (LSLILEYTWLEA) are extracellular. Residues 321-338 (VIFLIGIIVANVPEGLLA) form a helical membrane-spanning segment. Residues 339–772 (TVTVCLTLTA…EEGRLIFDNL (434 aa)) lie on the Cytoplasmic side of the membrane. The active-site 4-aspartylphosphate intermediate is the Asp376. Residues Ser452 and Ser484 each carry the phosphoserine modification. Residue Lys487 participates in ATP binding. Tyr542 is modified (phosphotyrosine). The interval 596–717 (RAAVPDAVGK…QGAIVAVTGD (122 aa)) is mediates interaction with SCN7A. Position 661 is an N6-succinyllysine (Lys661). Phosphoserine occurs at positions 668 and 675. Mg(2+)-binding residues include Asp717 and Asp721. The helical transmembrane segment at 773–792 (KKSIAYTLTSNIPEITPFLI) threads the bilayer. Residues 793-802 (FIIANIPLPL) are Extracellular-facing. A helical transmembrane segment spans residues 803 to 823 (GTVTILCIDLGTDMVPAISLA). At 824–843 (YEQAESDIMKRQPRNPKTDK) the chain is on the cytoplasmic side. The chain crosses the membrane as a helical span at residues 844–866 (LVNERLISMAYGQIGMIQALGGF). Over 867–918 (FTYFVILAENGFLPFHLLGIRETWDDRWINDVEDSYGQQWTYEQRKIVEFTC) the chain is Extracellular. The helical transmembrane segment at 919 to 938 (HTAFFVSIVVVQWADLVICK) threads the bilayer. The Cytoplasmic segment spans residues 939 to 951 (TRRNSVFQQGMKN). At Ser943 the chain carries Phosphoserine; by PKA. A helical transmembrane segment spans residues 952 to 970 (KILIFGLFEETALAAFLSY). Topologically, residues 971 to 985 (CPGMGAALRMYPLKP) are extracellular. Residues 986–1006 (TWWFCAFPYSLLIFVYDEVRK) form a helical membrane-spanning segment. The Cytoplasmic segment spans residues 1007-1023 (LIIRRRPGGWVEKETYY).

The protein belongs to the cation transport ATPase (P-type) (TC 3.A.3) family. Type IIC subfamily. In terms of assembly, the sodium/potassium-transporting ATPase is composed of a catalytic alpha subunit, an auxiliary non-catalytic beta subunit and an additional regulatory subunit. Interacts with regulatory subunit FXYD1. Interacts with regulatory subunit FXYD3. Interacts with SLC35G1 and STIM1. Interacts with SIK1. Interacts with CLN3; this interaction regulates the sodium/potassium-transporting ATPase complex localization at the plasma membrane. Interacts with SCN7A; activates ATP1A1 P-type sodium:potassium-exchanging transporter activity which indirectly signals to nearby neurons to regulate sodium homeostasis. Phosphorylation on Tyr-10 modulates pumping activity. Phosphorylation of Ser-943 by PKA modulates the response of ATP1A1 to PKC. Dephosphorylation by protein phosphatase 2A (PP2A) following increases in intracellular sodium, leading to increase catalytic activity. In terms of tissue distribution, expressed in the central nervous system, in most motor and sensory axons of the ventral and dorsal roots, as well as in the large motor neurons of the ventral horn (at protein level).

The protein resides in the cell membrane. The protein localises to the basolateral cell membrane. Its subcellular location is the sarcolemma. It localises to the cell projection. It is found in the axon. The protein resides in the melanosome. It catalyses the reaction K(+)(out) + Na(+)(in) + ATP + H2O = K(+)(in) + Na(+)(out) + ADP + phosphate + H(+). This is the catalytic component of the active enzyme, which catalyzes the hydrolysis of ATP coupled with the exchange of sodium and potassium ions across the plasma membrane. This action creates the electrochemical gradient of sodium and potassium ions, providing the energy for active transport of various nutrients. Could also be part of an osmosensory signaling pathway that senses body-fluid sodium levels and controls salt intake behavior as well as voluntary water intake to regulate sodium homeostasis. In Rattus norvegicus (Rat), this protein is Sodium/potassium-transporting ATPase subunit alpha-1 (Atp1a1).